Consider the following 299-residue polypeptide: Taste receptor type 2 member 5 (299 aa).

A topological domain (extracellular) is located at residue Met1. The chain crosses the membrane as a helical span at residues 2–22; it reads LSAGLGLLMLVAVVEFLIGLI. At 23 to 45 the chain is on the cytoplasmic side; it reads GNGVLVVWSFREWMRKFNWSSYN. The chain crosses the membrane as a helical span at residues 46–66; that stretch reads LIILGLAGCRFLLQWLIILDL. The Extracellular portion of the chain corresponds to 67-82; sequence SLFPLFQSSRWLRYLS. Residues 83 to 103 traverse the membrane as a helical segment; that stretch reads IFWVLVSQASLWFATFLSVFY. The Cytoplasmic portion of the chain corresponds to 104-127; the sequence is CKKITTFDRPAYLWLKQRAYNLSL. The helical transmembrane segment at 128 to 148 threads the bilayer; that stretch reads WCLLGYFIINLLLTVQIGLMF. The Extracellular portion of the chain corresponds to 149 to 175; it reads YHPPQGNSSIRYPFESWQYLYAFRLNS. An N-linked (GlcNAc...) asparagine glycan is attached at Asn155. A helical transmembrane segment spans residues 176 to 196; sequence GSYLPLMVFLVSSGMLIVSLY. Over 197–223 the chain is Cytoplasmic; it reads THHKKMKVHSAGRRDVRAKAHITALKS. The helical transmembrane segment at 224–244 threads the bilayer; it reads LGCFLFLHLVYIMASPFSITS. Topologically, residues 245–253 are extracellular; that stretch reads KTYPPDLTS. A helical transmembrane segment spans residues 254–274; that stretch reads VFIWETLMAAYPSLHSLILIM. Topologically, residues 275-299 are cytoplasmic; sequence GIPRVKQTCQKILWKTVCARRCWGP.

Belongs to the G-protein coupled receptor T2R family.

The protein resides in the membrane. In terms of biological role, receptor that may play a role in the perception of bitterness and is gustducin-linked. May play a role in sensing the chemical composition of the gastrointestinal content. The activity of this receptor may stimulate alpha gustducin, mediate PLC-beta-2 activation and lead to the gating of TRPM5. The polypeptide is Taste receptor type 2 member 5 (TAS2R5) (Gorilla gorilla gorilla (Western lowland gorilla)).